A 407-amino-acid chain; its full sequence is Transcriptional regulator alnR (407 aa).

The zn(2)-C6 fungal-type DNA-binding region spans 23–53 (SCDTCQEAKVKCSQHKPSCHRCLRHRQPCVY). The tract at residues 53 to 85 (YSPQRRSGRPPKRPSPSSRLGPESNNSGDDIHN) is disordered. Positions 75-85 (ESNNSGDDIHN) are enriched in polar residues.

Its subcellular location is the nucleus. Functionally, transcriptional regulator involved in the positive regulation of the expression of the gene cluster that mediates the biosynthesis of asperlin, a polyketide showing anti-inflammatory, antitumor and antibiotic activities. The polypeptide is Transcriptional regulator alnR (Emericella nidulans (strain FGSC A4 / ATCC 38163 / CBS 112.46 / NRRL 194 / M139) (Aspergillus nidulans)).